Consider the following 134-residue polypeptide: Small ribosomal subunit protein uS11 (134 aa).

The disordered stretch occupies residues 1 to 22 (MAQKTRATAARKPRRKVNKNVT). Residues 9–18 (AARKPRRKVN) are compositionally biased toward basic residues.

It belongs to the universal ribosomal protein uS11 family. Part of the 30S ribosomal subunit. Interacts with proteins S7 and S18. Binds to IF-3.

Functionally, located on the platform of the 30S subunit, it bridges several disparate RNA helices of the 16S rRNA. Forms part of the Shine-Dalgarno cleft in the 70S ribosome. The polypeptide is Small ribosomal subunit protein uS11 (Kocuria rhizophila (strain ATCC 9341 / DSM 348 / NBRC 103217 / DC2201)).